Reading from the N-terminus, the 154-residue chain is Flagellar assembly factor FliW (154 aa).

Belongs to the FliW family. As to quaternary structure, interacts with translational regulator CsrA and flagellin(s).

The protein localises to the cytoplasm. Functionally, acts as an anti-CsrA protein, binds CsrA and prevents it from repressing translation of its target genes, one of which is flagellin. Binds to flagellin and participates in the assembly of the flagellum. This is Flagellar assembly factor FliW from Carboxydothermus hydrogenoformans (strain ATCC BAA-161 / DSM 6008 / Z-2901).